The sequence spans 222 residues: PKHD-type hydroxylase PCC8801_2196 (222 aa).

The Fe2OG dioxygenase domain maps to 78 to 175; it reads RIHSLLFSRY…RLVVVGWIES (98 aa). Fe cation-binding residues include His-96, Asp-98, and His-156. Arg-166 provides a ligand contact to 2-oxoglutarate.

Fe(2+) serves as cofactor. Requires L-ascorbate as cofactor.

The chain is PKHD-type hydroxylase PCC8801_2196 from Rippkaea orientalis (strain PCC 8801 / RF-1) (Cyanothece sp. (strain PCC 8801)).